The sequence spans 282 residues: Undecaprenyl-diphosphatase 1 (282 aa).

A run of 8 helical transmembrane segments spans residues 1-21 (MLLL…VLPL), 46-66 (GVAL…LYFW), 91-111 (AFLV…LAHF), 117-137 (SPGL…LGVI), 150-170 (MGGI…LPGV), 193-213 (FSML…GLDL), 226-246 (LIAA…MMAW), and 260-280 (VLLG…APFL).

The protein belongs to the UppP family.

The protein resides in the cell inner membrane. The enzyme catalyses di-trans,octa-cis-undecaprenyl diphosphate + H2O = di-trans,octa-cis-undecaprenyl phosphate + phosphate + H(+). Catalyzes the dephosphorylation of undecaprenyl diphosphate (UPP). Confers resistance to bacitracin. This is Undecaprenyl-diphosphatase 1 from Rhodospirillum rubrum (strain ATCC 11170 / ATH 1.1.1 / DSM 467 / LMG 4362 / NCIMB 8255 / S1).